The following is a 582-amino-acid chain: Membrane protein insertase YidC (582 aa).

The helical transmembrane segment at 3 to 23 (IQRALVITGIAVVSYLMIQAW) threads the bilayer. Residues 38–92 (QVAEQGNSSSSDSADLPSVQSQTDNSIPSAQSDNDLPSVSPADIAQPTPSSQRIE) form a disordered region. The span at 45 to 58 (SSSSDSADLPSVQS) shows a compositional bias: low complexity. The segment covering 59-74 (QTDNSIPSAQSDNDLP) has biased composition (polar residues). 5 helical membrane passes run 357 to 377 (TVDY…LVFL), 394 to 414 (GVGN…AIFF), 464 to 484 (LGGC…YYVL), 495 to 515 (FFLW…PILM), and 541 to 561 (MPMI…LYWL).

It belongs to the OXA1/ALB3/YidC family. Type 1 subfamily. As to quaternary structure, interacts with the Sec translocase complex via SecD. Specifically interacts with transmembrane segments of nascent integral membrane proteins during membrane integration.

The protein localises to the cell inner membrane. Its function is as follows. Required for the insertion and/or proper folding and/or complex formation of integral membrane proteins into the membrane. Involved in integration of membrane proteins that insert both dependently and independently of the Sec translocase complex, as well as at least some lipoproteins. Aids folding of multispanning membrane proteins. This is Membrane protein insertase YidC from Alcanivorax borkumensis (strain ATCC 700651 / DSM 11573 / NCIMB 13689 / SK2).